The primary structure comprises 142 residues: Hemoglobin A subunit alpha-1 (142 aa).

The Globin domain maps to 2–142; it reads VLTAGDKANV…VATALTSKYR (141 aa). Residue His-59 coordinates O2. Position 88 (His-88) interacts with heme b.

The protein belongs to the globin family. As to quaternary structure, tetramer of alpha-1, alpha-2 and two identical beta chains. As to expression, red blood cells.

Functionally, involved in oxygen transport from the lung to the various peripheral tissues. In Aldabrachelys gigantea (Aldabra giant tortoise), this protein is Hemoglobin A subunit alpha-1.